The following is a 310-amino-acid chain: MTDLPFTLDQLRILKAIASEGSFKKAAESLYISQPAVSLQIQNLEKQLNIPIFDRANRKAVFTEEGDTLLRYGNRVLSLCDETCRAIEDLKTLQGGTLIIGASQTTGTYLMPRLIGLFRHKYPQIAVQLQVHSTRRVAWSVANGQVNLAVVGGKVPDELRSKLQITPYVDDELALILPKLHPFSKLEVIQKEDLYRLRFITLDKQSTIRRVIDTVLNEHGIDSARFKIEMELNSVEAIKNAVQSGLGAAFVSISAIAKELELGLLHWVKIEGVVIKRTLSIITNPSRYQAKASEIFSKEILTLFVTPYEI.

An HTH lysR-type domain is found at 6-63 (FTLDQLRILKAIASEGSFKKAAESLYISQPAVSLQIQNLEKQLNIPIFDRANRKAVFT). Residues 23–42 (FKKAAESLYISQPAVSLQIQ) constitute a DNA-binding region (H-T-H motif).

It belongs to the LysR transcriptional regulatory family.

The protein localises to the plastid. Its subcellular location is the chloroplast. Its function is as follows. Trans-acting transcriptional regulator of RuBisCO genes (rbcL and rbcS) expression. This Guillardia theta (Cryptophyte) protein is Probable RuBisCO transcriptional regulator (rbcR).